The primary structure comprises 131 residues: Flagellar assembly factor FliW (131 aa).

The protein belongs to the FliW family. In terms of assembly, interacts with translational regulator CsrA and flagellin(s).

The protein localises to the cytoplasm. Functionally, acts as an anti-CsrA protein, binds CsrA and prevents it from repressing translation of its target genes, one of which is flagellin. Binds to flagellin and participates in the assembly of the flagellum. This Campylobacter lari (strain RM2100 / D67 / ATCC BAA-1060) protein is Flagellar assembly factor FliW.